A 295-amino-acid polypeptide reads, in one-letter code: Sulfotransferase 1A3 (295 aa).

Residue 48 to 53 coordinates 3'-phosphoadenylyl sulfate; it reads KSGTTW. Dopamine is bound by residues Asp-86 and 106-108; that span reads KSH. The active-site Proton acceptor is the His-108. The 3'-phosphoadenylyl sulfate site is built by Arg-130 and Ser-138. Residue Glu-146 participates in dopamine binding. Residues Tyr-193, 227–232, and 257–259 each bind 3'-phosphoadenylyl sulfate; these read TSFKEM and RKG.

This sequence belongs to the sulfotransferase 1 family. Homodimer. Post-translationally, the N-terminus is blocked. In terms of tissue distribution, liver, colon, kidney, lung, brain, spleen, small intestine, placenta and leukocyte.

The protein localises to the cytoplasm. It carries out the reaction a phenol + 3'-phosphoadenylyl sulfate = an aryl sulfate + adenosine 3',5'-bisphosphate + H(+). The catalysed reaction is 4-nitrophenol + 3'-phosphoadenylyl sulfate = 4-nitrophenyl sulfate + adenosine 3',5'-bisphosphate. It catalyses the reaction dopamine + 3'-phosphoadenylyl sulfate = dopamine 3-O-sulfate + adenosine 3',5'-bisphosphate + H(+). The enzyme catalyses dopamine + 3'-phosphoadenylyl sulfate = dopamine 4-O-sulfate + adenosine 3',5'-bisphosphate + H(+). It carries out the reaction serotonin + 3'-phosphoadenylyl sulfate = serotonin O-sulfate + adenosine 3',5'-bisphosphate + H(+). The catalysed reaction is (R)-adrenaline + 3'-phosphoadenylyl sulfate = (R)-adrenaline 4'-O-sulfate + adenosine 3',5'-bisphosphate + H(+). It catalyses the reaction (R)-noradrenaline + 3'-phosphoadenylyl sulfate = (R)-noradrenaline 4'-O-sulfate + adenosine 3',5'-bisphosphate + H(+). The enzyme catalyses 3,3',5-triiodo-L-thyronine + 3'-phosphoadenylyl sulfate = 3,3',5-triiodo-L-thyronine sulfate + adenosine 3',5'-bisphosphate + H(+). It carries out the reaction 3,3',5'-triiodo-L-thyronine + 3'-phosphoadenylyl sulfate = 3,3',5'-triiodo-L-thyronine sulfate + adenosine 3',5'-bisphosphate + H(+). The catalysed reaction is 3,3'-diiodo-L-thyronine + 3'-phosphoadenylyl sulfate = 3,3'-diiodo-L-thyronine sulfate + adenosine 3',5'-bisphosphate + H(+). It catalyses the reaction L-thyroxine + 3'-phosphoadenylyl sulfate = L-thyroxine sulfate + adenosine 3',5'-bisphosphate + H(+). Sulfotransferase that utilizes 3'-phospho-5'-adenylyl sulfate (PAPS) as sulfonate donor to catalyze the sulfate conjugation of phenolic monoamines (neurotransmitters such as dopamine, (R)-adrenaline/epinephrine, (R)-noradrenaline/norepinephrine and serotonin) and phenolic and catechol drugs. Catalyzes the sulfation of T4 (L-thyroxine/3,5,3',5'-tetraiodothyronine), T3 (3,5,3'-triiodothyronine), rT3 (3,3',5'-triiodothyronine) and 3,3'-T2 (3,3'-diiodothyronine), with a substrate preference of 3,3'-T2 &gt; rT3 &gt; T3 &gt; T4. The sequence is that of Sulfotransferase 1A3 (SULT1A3) from Homo sapiens (Human).